The chain runs to 381 residues: Creatine kinase B-type (381 aa).

Ser-4 carries the phosphoserine modification. A Phosphagen kinase N-terminal domain is found at 11–98 (KLRFPAEDEF…FDPIIEDRHG (88 aa)). Phosphothreonine is present on Thr-35. A Glycyl lysine isopeptide (Lys-Gly) (interchain with G-Cter in ubiquitin) cross-link involves residue Lys-45. Residue Val-72 participates in creatine binding. The span at 96–110 (RHGGYKPSDEHKTDL) shows a compositional bias: basic and acidic residues. A disordered region spans residues 96–123 (RHGGYKPSDEHKTDLNPDNLQGGDDLDP). Residues Lys-101 and Lys-107 each participate in a glycyl lysine isopeptide (Lys-Gly) (interchain with G-Cter in ubiquitin) cross-link. Tyr-125 bears the Phosphotyrosine mark. A Phosphagen kinase C-terminal domain is found at 125-367 (YVLSSRVRTG…KLLIEMEQRL (243 aa)). ATP contacts are provided by residues 128 to 132 (SSRVR), Arg-130, Arg-132, and His-191. An internal MTS-like signal region spans residues 130–138 (RVRTGRSIR). Ser-199 carries the post-translational modification Phosphoserine. Glu-232 is a creatine binding site. Arg-236 contributes to the ATP binding site. 3'-nitrotyrosine is present on Tyr-269. Ser-285 provides a ligand contact to creatine. ATP is bound by residues Arg-292, 292 to 296 (RAGVH), Arg-320, 320 to 325 (RGTGGV), and Asp-335. Residue Thr-322 is modified to Phosphothreonine. Residue Lys-381 forms a Glycyl lysine isopeptide (Lys-Gly) (interchain with G-Cter in ubiquitin) linkage.

This sequence belongs to the ATP:guanido phosphotransferase family. Dimer of identical or non-identical chains, which can be either B (brain type) or M (muscle type). With MM being the major form in skeletal muscle and myocardium, MB existing in myocardium, and BB existing in many tissues, especially brain. Interacts with SLC12A6 (via C-terminus); the interaction may be required for SLC12A6 potassium-chloride cotransport activity. Ubiquitinated by the ECS(ASB9) complex, leading to its degradation by the proteasome.

The protein localises to the cytoplasm. It is found in the cytosol. Its subcellular location is the mitochondrion. It localises to the cell membrane. It catalyses the reaction creatine + ATP = N-phosphocreatine + ADP + H(+). In terms of biological role, reversibly catalyzes the transfer of phosphate between ATP and various phosphogens (e.g. creatine phosphate). Creatine kinase isoenzymes play a central role in energy transduction in tissues with large, fluctuating energy demands, such as skeletal muscle, heart, brain and spermatozoa. Acts as a key regulator of adaptive thermogenesis as part of the futile creatine cycle: localizes to the mitochondria of thermogenic fat cells and acts by mediating phosphorylation of creatine to initiate a futile cycle of creatine phosphorylation and dephosphorylation. During the futile creatine cycle, creatine and N-phosphocreatine are in a futile cycle, which dissipates the high energy charge of N-phosphocreatine as heat without performing any mechanical or chemical work. The polypeptide is Creatine kinase B-type (CKB) (Sus scrofa (Pig)).